We begin with the raw amino-acid sequence, 149 residues long: Ribosomal RNA large subunit methyltransferase H (149 aa).

S-adenosyl-L-methionine-binding positions include Leu71, Gly98, and 117–122 (LSKMTL).

Belongs to the RNA methyltransferase RlmH family. Homodimer.

It is found in the cytoplasm. It carries out the reaction pseudouridine(1915) in 23S rRNA + S-adenosyl-L-methionine = N(3)-methylpseudouridine(1915) in 23S rRNA + S-adenosyl-L-homocysteine + H(+). Specifically methylates the pseudouridine at position 1915 (m3Psi1915) in 23S rRNA. The polypeptide is Ribosomal RNA large subunit methyltransferase H (Campylobacter fetus subsp. fetus (strain 82-40)).